We begin with the raw amino-acid sequence, 342 residues long: Dysbindin (342 aa).

Serine 11 carries the phosphoserine modification. Residues 83–180 (LSAHWEKKQA…AELDAEHSQK (98 aa)) are a coiled coil. Positions 243–256 (LMDISDQEALDVFL) match the Nuclear export signal motif. Residues 263–342 (NTLLSPISGP…ATLHSDDSDS (80 aa)) are disordered. Positions 286–305 (PTPSQAPATPPSSSSPGTDP) are enriched in low complexity. Phosphoserine occurs at positions 316, 321, and 340.

This sequence belongs to the dysbindin family. In terms of assembly, interacts (via its coiled coil domain) with KXD1. Interacts with CMYA5, PI4K2 and RNF151. Component of the biogenesis of lysosome-related organelles complex 1 (BLOC-1) composed of at least BLOC1S1, BLOC1S2, BLOC1S3, BLOC1S4, BLOC1S5, BLOC1S6, DTNBP1/BLOC1S7 and SNAPIN/BLOC1S8. Interacts directly in the complex with BLOC1S5, BLOC1S6 and SNAPIN/BLOC1S8. The BLOC-1 complex associates with the AP-3 protein complex and membrane protein cargos. This BLOC-1 complex also associates with the BLOC-2 complex in endosomes. Binds to DTNA and DTNB but may not be a physiological binding partner. Interacts with the DNA-dependent protein kinase complex DNA-PK; the interaction phosphorylates DTNBP1 in vitro. Interacts directly in this complex with XRCC5 and XRCC6. Interacts with AP3M1, AP3B2 and TRIM32. Interacts with XPO1; the interaction exports DTNBP1 out of the nucleus. In terms of processing, ubiquitinated by TRIM32. Ubiquitination leads to DTNBP1 degradation.

It localises to the cytoplasm. The protein resides in the cytoplasmic vesicle membrane. Its subcellular location is the cytoplasmic vesicle. The protein localises to the secretory vesicle. It is found in the synaptic vesicle membrane. It localises to the endosome membrane. The protein resides in the melanosome membrane. Its subcellular location is the nucleus. The protein localises to the postsynaptic density. It is found in the presynaptic cell membrane. It localises to the endoplasmic reticulum. In terms of biological role, component of the BLOC-1 complex, a complex that is required for normal biogenesis of lysosome-related organelles (LRO), such as platelet dense granules and melanosomes. In concert with the AP-3 complex, the BLOC-1 complex is required to target membrane protein cargos into vesicles assembled at cell bodies for delivery into neurites and nerve terminals. The BLOC-1 complex, in association with SNARE proteins, is also proposed to be involved in neurite extension. Associates with the BLOC-2 complex to facilitate the transport of TYRP1 independent of AP-3 function. Plays a role in synaptic vesicle trafficking and in neurotransmitter release. Plays a role in the regulation of cell surface exposure of DRD2. May play a role in actin cytoskeleton reorganization and neurite outgrowth. May modulate MAPK8 phosphorylation. Appears to promote neuronal transmission and viability through regulating the expression of SNAP25 and SYN1, modulating PI3-kinase-Akt signaling and influencing glutamatergic release. Regulates the expression of SYN1 through binding to its promoter. Modulates prefrontal cortical activity via the dopamine/D2 pathway. This Bos taurus (Bovine) protein is Dysbindin (DTNBP1).